The chain runs to 41 residues: MKVLSSLKSAKTRHRDCKVVRRRGKVFVICKSNPRFKARQR.

Belongs to the bacterial ribosomal protein bL36 family.

This is Large ribosomal subunit protein bL36 from Xanthomonas axonopodis pv. citri (strain 306).